A 222-amino-acid chain; its full sequence is MVEAEDLQSLKTIALLGGCRGPIWLSSQSLGSVLGISPQTASRRLIALERQQFVTRSMKPDGQYVAVTREGEQALKREYADYVRIFNPDQRGYTLTGTVISGLGEGRYYMSIPHYKEQFGGCLGFEPFPGTLNIRLDAASIAVRKHLDHAGWIDVPGFTADDRTFGGARVLPCLIRGYRCAIVVPSRTHYPEDTIEVIAGCELRKALNLNDNDTIEVEITHD.

Positions 1-92 (MVEAEDLQSL…VRIFNPDQRG (92 aa)) are unknown. A riboflavin kinase region spans residues 93–222 (YTLTGTVISG…DTIEVEITHD (130 aa)). 102–107 (GLGEGR) provides a ligand contact to CDP. Residues threonine 131 and asparagine 133 each coordinate Mg(2+). Residues threonine 188 and glutamate 196 each contribute to the FMN site. A CDP-binding site is contributed by 201-204 (CELR).

It belongs to the archaeal riboflavin kinase family. Requires Mg(2+) as cofactor.

The catalysed reaction is riboflavin + CTP = CDP + FMN + H(+). The protein operates within cofactor biosynthesis; FMN biosynthesis; FMN from riboflavin (CTP route): step 1/1. In terms of biological role, catalyzes the CTP-dependent phosphorylation of riboflavin (vitamin B2) to form flavin mononucleotide (FMN). The chain is Riboflavin kinase (ribK) from Methanoculleus marisnigri (strain ATCC 35101 / DSM 1498 / JR1).